The following is a 186-amino-acid chain: MIEASKLRAGMTFVTNDGKLLKVLEASHHKPGKGNTIMRMKLRDVRSGSTFDTSYRPEEKFEQAIIETVPAQYLYQMDDTAYFMNTETYDQYEIPVVNVQEELKFILENSDVKIQFYGTEVIGVQVPTTVELTVTETQPSIKGATVTGSGKPATLETGLVVNVPDFIEAGQKLVINTVEGTYVSRA.

Belongs to the elongation factor P family.

It is found in the cytoplasm. Its pathway is protein biosynthesis; polypeptide chain elongation. Its function is as follows. Involved in peptide bond synthesis. Stimulates efficient translation and peptide-bond synthesis on native or reconstituted 70S ribosomes in vitro. Probably functions indirectly by altering the affinity of the ribosome for aminoacyl-tRNA, thus increasing their reactivity as acceptors for peptidyl transferase. This chain is Elongation factor P, found in Streptococcus thermophilus (strain CNRZ 1066).